Here is a 520-residue protein sequence, read N- to C-terminus: Chaperone Ric-8B (520 aa).

Residue Ser-468 is modified to Phosphoserine. A Phosphothreonine modification is found at Thr-473.

This sequence belongs to the synembryn family. Interacts with GDP-bound G(s) G-alpha proteins GNAL and GNAS. Does not interact with G-alpha proteins when they are in complex with subunits beta and gamma.

It localises to the cytoplasm. Its subcellular location is the cell cortex. Chaperone that specifically binds and folds nascent G(s) G-alpha proteins (GNAS and GNAL) prior to G protein heterotrimer formation, promoting their association with the plasma membrane. Also acts as a guanine nucleotide exchange factor (GEF) for G(s) proteins by stimulating exchange of bound GDP for free GTP. Acts as an important component for odorant signal transduction by mediating GNAL (G(olf)-alpha) folding, thereby promoting-dependent cAMP accumulation in olfactory sensory neurons. In Rattus norvegicus (Rat), this protein is Chaperone Ric-8B (Ric8b).